We begin with the raw amino-acid sequence, 47 residues long: Potassium channel toxin gamma-KTx 5.2 (47 aa).

4 disulfide bridges follow: C5/C23, C11/C34, C20/C39, and C24/C41.

Belongs to the ergtoxin family. Gamma-KTx 5 subfamily. In terms of tissue distribution, expressed by the venom gland.

The protein localises to the secreted. In terms of biological role, reversibly blocks Kv11/ERG potassium channels. In Centruroides gracilis (Slenderbrown scorpion), this protein is Potassium channel toxin gamma-KTx 5.2.